The primary structure comprises 124 residues: UPF0382 membrane protein HI_1073 (124 aa).

A run of 3 helical transmembrane segments spans residues leucine 6–glycine 26, serine 70–phenylalanine 90, and valine 95–alanine 115.

The protein belongs to the UPF0382 family.

The protein localises to the cell membrane. This chain is UPF0382 membrane protein HI_1073, found in Haemophilus influenzae (strain ATCC 51907 / DSM 11121 / KW20 / Rd).